We begin with the raw amino-acid sequence, 596 residues long: MRVSRLMLNTLRDVPSEADIISHQLLVRGGYIKRITGGIYAYMPLLWKVLKKITSIVEEELSTKGCLQTLLPQLQPSEIWERSGRWKSYTQGEGIMFSLKDRQGKELGLGPTHEEVITQIISQTIHSYKQLPINIFQIQTKFRDEIRPRFGLMRSREFIMKDAYSFHANENDLQSTYSDMRNAYQNIFTKCGLDFVCVDADSGAIGGAASQEFMVTAESGEDLILISSDGKYGANQEKAVSIIEEGNLLEPNKPSIIKTPNQKTIDELCNYNDFHPSQIVKVLAYLATCDDNKKYPVLVSIRGDQEINDIKLSNKISQELKKNVLDIRIIYNEDMQKQGITNIPFGFIGPDLSDNLLAQSKGWEKKFIRIADNSAKDLKSFICGNNIKDEHKIFYNWNLINTVQLICDIRKAKPGDRCIHDKTQKLEECRGIEIGHIFQLGTKYSKSLNATFTNEKGIEDHLWMGCYGIGISRLAQAAVEQNHDDLGIIWPTSIAPFTVIIIIANIKNNDQKCLAEDIYQKLIQNRVDVLLDDRDDRAGIKFKDADLIGIPWRIVAGREASSGLVELHNRKTKTTELLDLNSVLKKLSEEFNTEKL.

This sequence belongs to the class-II aminoacyl-tRNA synthetase family. ProS type 1 subfamily. Homodimer.

The protein localises to the cytoplasm. It carries out the reaction tRNA(Pro) + L-proline + ATP = L-prolyl-tRNA(Pro) + AMP + diphosphate. In terms of biological role, catalyzes the attachment of proline to tRNA(Pro) in a two-step reaction: proline is first activated by ATP to form Pro-AMP and then transferred to the acceptor end of tRNA(Pro). As ProRS can inadvertently accommodate and process non-cognate amino acids such as alanine and cysteine, to avoid such errors it has two additional distinct editing activities against alanine. One activity is designated as 'pretransfer' editing and involves the tRNA(Pro)-independent hydrolysis of activated Ala-AMP. The other activity is designated 'posttransfer' editing and involves deacylation of mischarged Ala-tRNA(Pro). The misacylated Cys-tRNA(Pro) is not edited by ProRS. This is Proline--tRNA ligase from Prochlorococcus marinus (strain NATL1A).